Consider the following 322-residue polypeptide: Acetyl-coenzyme A carboxylase carboxyl transferase subunit alpha (322 aa).

Positions 43-297 (ALKSKSNALT…KEVLTQQLNK (255 aa)) constitute a CoA carboxyltransferase C-terminal domain.

This sequence belongs to the AccA family. As to quaternary structure, acetyl-CoA carboxylase is a heterohexamer composed of biotin carboxyl carrier protein (AccB), biotin carboxylase (AccC) and two subunits each of ACCase subunit alpha (AccA) and ACCase subunit beta (AccD).

It localises to the cytoplasm. The enzyme catalyses N(6)-carboxybiotinyl-L-lysyl-[protein] + acetyl-CoA = N(6)-biotinyl-L-lysyl-[protein] + malonyl-CoA. The protein operates within lipid metabolism; malonyl-CoA biosynthesis; malonyl-CoA from acetyl-CoA: step 1/1. Component of the acetyl coenzyme A carboxylase (ACC) complex. First, biotin carboxylase catalyzes the carboxylation of biotin on its carrier protein (BCCP) and then the CO(2) group is transferred by the carboxyltransferase to acetyl-CoA to form malonyl-CoA. The protein is Acetyl-coenzyme A carboxylase carboxyl transferase subunit alpha of Vesicomyosocius okutanii subsp. Calyptogena okutanii (strain HA).